The sequence spans 593 residues: Probable metalloendopeptidase G1-type (593 aa).

H41 contributes to the Zn(2+) binding site. E44 is an active-site residue. A Zn(2+)-binding site is contributed by H45.

Belongs to the peptidase M44 family. Zn(2+) serves as cofactor.

Its function is as follows. Seems to be involved in viral proteins maturation by cleavage at Ala-Gly-|-Xaa motifs. This Homo sapiens (Human) protein is Probable metalloendopeptidase G1-type.